Here is a 549-residue protein sequence, read N- to C-terminus: OBERON-like protein (549 aa).

Positions 1-56 are disordered; the sequence is MLPPRQQPRPGGLQTSLSLVSPDACGSPNPQERGSTSDQARDSPSESASSRETWPT. Polar residues-rich tracts occupy residues 28–38 and 45–56; these read PNPQERGSTSD and SESASSRETWPT. Residues 224–288 form a PHD-type zinc finger; the sequence is LCMCVICYKF…LFRCHACSRT (65 aa). A coiled-coil region spans residues 394–520; sequence VQEAIRKMEA…YLFEKIKLQE (127 aa). Residues 519 to 549 are disordered; the sequence is QESSRASQSSAGGNDPSQMMYSKIQDLIKNM. Over residues 521–538 the composition is skewed to polar residues; the sequence is SSRASQSSAGGNDPSQMM.

Self-interacts and probably forms heteromers. Binds to VPg of pea seed borne mosaic virus (PSbMV), turnip mosaic virus (TuMV) and lettuce mosaic virus (LMV), but not with VPg of tobacco etch virus (TEV), cowpea mosaic virus (CPMV), tomato black ring virus (TBRV) and grapevine fan leaf virus (GFLV).

It localises to the nucleus. Its function is as follows. Required for the maintenance and/or establishment of both the shoot and root meristems, probably by controlling the expression of the meristem genes and of genes required for auxin responses. Involved in the development of the basal pole and in auxin-mediated root and vascular development in the embryo. Confers sensitivity to turnip mosaic virus (TuMV) probably by promoting viral movement and multiplication via interaction with TuMV VPg. This chain is OBERON-like protein (PVIP), found in Nicotiana benthamiana.